The primary structure comprises 77 residues: Small ribosomal subunit protein bS16c (77 aa).

This sequence belongs to the bacterial ribosomal protein bS16 family.

The protein resides in the plastid. It localises to the chloroplast. This is Small ribosomal subunit protein bS16c from Eucalyptus globulus subsp. globulus (Tasmanian blue gum).